The sequence spans 281 residues: MNQERLIAAEDITFRYQKDADRPALDHVSFHVSKGEWLAIVGHNGSGKSTLARALNGLILPDEGSIKVGGIKLTEETVWDVRKKVGMVFQNPDNQFVGTTVRDDVAFGLENSGVPREDMVERVDWAVQQVNMQEFLDQEPHHLSGGQKQRVAIAGVLAARPDIMILDEATSMLDPMGREEVLDTVRRLKDQGMVTVISITHDLNEAAKADRIIVMNSGRKFAEGTPQEVFRLNQDLIKIGLDLPFSFQLTQMLKESGLALKGDHLTQEGLVNELWTLKSKM.

Residues 7–242 (IAAEDITFRY…NQDLIKIGLD (236 aa)) enclose the ABC transporter domain. An ATP-binding site is contributed by 42 to 49 (GHNGSGKS).

The protein belongs to the ABC transporter superfamily. Energy-coupling factor EcfA family. As to quaternary structure, forms a stable energy-coupling factor (ECF) transporter complex composed of 2 membrane-embedded substrate-binding proteins (S component), 2 ATP-binding proteins (A component) and 2 transmembrane proteins (T component).

The protein resides in the cell membrane. Its function is as follows. ATP-binding (A) component of a common energy-coupling factor (ECF) ABC-transporter complex. Unlike classic ABC transporters this ECF transporter provides the energy necessary to transport a number of different substrates. In Bacillus licheniformis (strain ATCC 14580 / DSM 13 / JCM 2505 / CCUG 7422 / NBRC 12200 / NCIMB 9375 / NCTC 10341 / NRRL NRS-1264 / Gibson 46), this protein is Energy-coupling factor transporter ATP-binding protein EcfA1.